We begin with the raw amino-acid sequence, 190 residues long: Potassium-transporting ATPase KdpC subunit (190 aa).

The chain crosses the membrane as a helical span at residues Thr-10 to Gly-30.

This sequence belongs to the KdpC family. The system is composed of three essential subunits: KdpA, KdpB and KdpC.

Its subcellular location is the cell inner membrane. Functionally, part of the high-affinity ATP-driven potassium transport (or Kdp) system, which catalyzes the hydrolysis of ATP coupled with the electrogenic transport of potassium into the cytoplasm. This subunit acts as a catalytic chaperone that increases the ATP-binding affinity of the ATP-hydrolyzing subunit KdpB by the formation of a transient KdpB/KdpC/ATP ternary complex. In Escherichia coli (strain 55989 / EAEC), this protein is Potassium-transporting ATPase KdpC subunit.